The sequence spans 159 residues: Large ribosomal subunit protein bL17 (159 aa).

Residues 119–138 (PVTPKAKPAKSTAKAAPKSK) show a composition bias toward low complexity. A disordered region spans residues 119-159 (PVTPKAKPAKSTAKAAPKSKAPVEETPDEPASEETAEAEAD). Residues 143–159 (ETPDEPASEETAEAEAD) are compositionally biased toward acidic residues.

The protein belongs to the bacterial ribosomal protein bL17 family. As to quaternary structure, part of the 50S ribosomal subunit. Contacts protein L32.

This chain is Large ribosomal subunit protein bL17, found in Leifsonia xyli subsp. xyli (strain CTCB07).